The following is a 210-amino-acid chain: Guanylate kinase (210 aa).

The 181-residue stretch at 6–186 folds into the Guanylate kinase-like domain; it reads GLLGIISAPS…ALIYLQSVIL (181 aa). Position 13–20 (13–20) interacts with ATP; that stretch reads APSGAGKS.

Belongs to the guanylate kinase family.

It localises to the cytoplasm. It catalyses the reaction GMP + ATP = GDP + ADP. Essential for recycling GMP and indirectly, cGMP. The chain is Guanylate kinase from Blochmanniella floridana.